Consider the following 78-residue polypeptide: Beta-defensin 12 (78 aa).

The N-terminal stretch at 1–27 is a signal peptide; it reads MALSRGTFYFGLALFFIVVELPSGSWA. Intrachain disulfides connect cysteine 46-cysteine 73, cysteine 53-cysteine 67, and cysteine 57-cysteine 74.

It belongs to the beta-defensin family.

The protein localises to the secreted. Has antibacterial activity. The chain is Beta-defensin 12 (Defb12) from Rattus norvegicus (Rat).